An 89-amino-acid chain; its full sequence is Acylphosphatase (89 aa).

An Acylphosphatase-like domain is found at 3-88 (TLHLQIEGRV…GEYSGFEKRS (86 aa)). Residues Arg-18 and Asn-36 contribute to the active site.

This sequence belongs to the acylphosphatase family.

It carries out the reaction an acyl phosphate + H2O = a carboxylate + phosphate + H(+). The protein is Acylphosphatase (acyP) of Thiobacillus denitrificans (strain ATCC 25259 / T1).